A 62-amino-acid chain; its full sequence is Large ribosomal subunit protein eL37 (62 aa).

Cys-20, Cys-23, Cys-35, and Cys-38 together coordinate Zn(2+). The C4-type zinc-finger motif lies at 20-38; it reads CRRCGRHAFNVAKGYCAAC.

Belongs to the eukaryotic ribosomal protein eL37 family. Requires Zn(2+) as cofactor.

Functionally, binds to the 23S rRNA. This Staphylothermus marinus (strain ATCC 43588 / DSM 3639 / JCM 9404 / F1) protein is Large ribosomal subunit protein eL37.